Reading from the N-terminus, the 885-residue chain is Alanine--tRNA ligase (885 aa).

Residues His-574, His-578, Cys-685, and His-689 each contribute to the Zn(2+) site.

Belongs to the class-II aminoacyl-tRNA synthetase family. The cofactor is Zn(2+).

The protein localises to the cytoplasm. The enzyme catalyses tRNA(Ala) + L-alanine + ATP = L-alanyl-tRNA(Ala) + AMP + diphosphate. Functionally, catalyzes the attachment of alanine to tRNA(Ala) in a two-step reaction: alanine is first activated by ATP to form Ala-AMP and then transferred to the acceptor end of tRNA(Ala). Also edits incorrectly charged Ser-tRNA(Ala) and Gly-tRNA(Ala) via its editing domain. The sequence is that of Alanine--tRNA ligase from Deinococcus geothermalis (strain DSM 11300 / CIP 105573 / AG-3a).